A 223-amino-acid chain; its full sequence is Ubiquitin carboxyl-terminal hydrolase isozyme L1 (223 aa).

N-acetylmethionine is present on Met-1. Residues 2 to 221 (QLKPMEINPE…VRFSAVALCK (220 aa)) form the UCH catalytic domain. Positions 5 to 10 (PMEINP) are interaction with ubiquitin. Cys-90 serves as the catalytic Nucleophile. A Phosphoserine modification is found at Ser-125. His-161 acts as the Proton donor in catalysis. An interaction with ubiquitin region spans residues 211-216 (EVRFSA). Cys-220 carries S-farnesyl cysteine lipidation. Residues 221 to 223 (KAA) constitute a propeptide, removed in mature form.

This sequence belongs to the peptidase C12 family. In terms of assembly, monomer. Homodimer. Interacts with COPS5 and SNCA. In terms of processing, O-glycosylated.

It is found in the cytoplasm. The protein localises to the endoplasmic reticulum membrane. The enzyme catalyses Thiol-dependent hydrolysis of ester, thioester, amide, peptide and isopeptide bonds formed by the C-terminal Gly of ubiquitin (a 76-residue protein attached to proteins as an intracellular targeting signal).. Ubiquitin-protein hydrolase involved both in the processing of ubiquitin precursors and of ubiquitinated proteins. This enzyme is a thiol protease that recognizes and hydrolyzes a peptide bond at the C-terminal glycine of ubiquitin. Also binds to free monoubiquitin and may prevent its degradation in lysosomes. The homodimer may have ATP-independent ubiquitin ligase activity. The chain is Ubiquitin carboxyl-terminal hydrolase isozyme L1 (UCHL1) from Equus caballus (Horse).